Here is an 843-residue protein sequence, read N- to C-terminus: Glycogen phosphorylase, brain form (843 aa).

An N-acetylalanine modification is found at alanine 2. Position 15 is a phosphoserine; by PHK; in form phosphorylase A (serine 15). The AMP site is built by aspartate 43, tyrosine 197, and arginine 310. The residue at position 197 (tyrosine 197) is a Phosphotyrosine. A Phosphotyrosine modification is found at tyrosine 473. Lysine 569 serves as a coordination point for pyridoxal 5'-phosphate. The interval 677–678 is pyridoxal 5'-phosphate; it reads TG. The residue at position 681 (lysine 681) is an N6-(pyridoxal phosphate)lysine.

Belongs to the glycogen phosphorylase family. In terms of assembly, homodimer. Dimers associate into a tetramer to form the enzymatically active phosphorylase A. The cofactor is pyridoxal 5'-phosphate. In terms of processing, phosphorylation of Ser-15 converts phosphorylase B (unphosphorylated) to phosphorylase A.

The catalysed reaction is [(1-&gt;4)-alpha-D-glucosyl](n) + phosphate = [(1-&gt;4)-alpha-D-glucosyl](n-1) + alpha-D-glucose 1-phosphate. With respect to regulation, activity of phosphorylase is controlled both by allosteric means (through the non-covalent binding of metabolites) and by covalent modification. Thus AMP allosterically activates, whereas ATP, ADP, and glucose-6-phosphate allosterically inhibit, phosphorylase B. In terms of biological role, glycogen phosphorylase that regulates glycogen mobilization. Phosphorylase is an important allosteric enzyme in carbohydrate metabolism. Enzymes from different sources differ in their regulatory mechanisms and in their natural substrates. However, all known phosphorylases share catalytic and structural properties. This is Glycogen phosphorylase, brain form (PYGB) from Bos taurus (Bovine).